The sequence spans 124 residues: Small ribosomal subunit protein uS11 (124 aa).

Belongs to the universal ribosomal protein uS11 family. In terms of assembly, part of the 30S ribosomal subunit. Interacts with proteins S7 and S18. Binds to IF-3.

In terms of biological role, located on the platform of the 30S subunit, it bridges several disparate RNA helices of the 16S rRNA. Forms part of the Shine-Dalgarno cleft in the 70S ribosome. This Sulfurovum sp. (strain NBC37-1) protein is Small ribosomal subunit protein uS11.